A 126-amino-acid polypeptide reads, in one-letter code: C-type natriuretic peptide 2 (126 aa).

Residues 1-22 (MAVCSSSSLILLTVFLSVAVET) form the signal peptide. Positions 23 to 102 (RPSSDRDEEQ…REKTRRWGRK (80 aa)) are excised as a propeptide. The segment at 44–80 (SLILAPPTSNDSTEGSSGSPEPPTPSEAPVLIHGDRG) is disordered. Residues Cys110 and Cys126 are joined by a disulfide bond.

This sequence belongs to the natriuretic peptide family. In terms of tissue distribution, brain and spinal cord.

It localises to the secreted. Its function is as follows. Exhibits natriuretic and vasodepressant activity. Has cGMP-stimulating activity. May help to regulate body fluid homeostasis in a variety of aquatic environments. In Oryzias latipes (Japanese rice fish), this protein is C-type natriuretic peptide 2.